Reading from the N-terminus, the 1028-residue chain is Beta-galactosidase (1028 aa).

Substrate is bound by residues Asn104 and Asp203. Asp203 provides a ligand contact to Na(+). Mg(2+) is bound by residues Glu418, His420, and Glu463. Substrate contacts are provided by residues Glu463 and 539–542 (EYAH). The active-site Proton donor is the Glu463. Glu539 serves as the catalytic Nucleophile. Asn599 contributes to the Mg(2+) binding site. Na(+) is bound by residues Phe603 and Asn606. The substrate site is built by Asn606 and Trp1004.

Belongs to the glycosyl hydrolase 2 family. Homotetramer. It depends on Mg(2+) as a cofactor. The cofactor is Na(+).

The enzyme catalyses Hydrolysis of terminal non-reducing beta-D-galactose residues in beta-D-galactosides.. The chain is Beta-galactosidase from Enterobacter sp. (strain 638).